The primary structure comprises 159 residues: NAD(P)H-quinone oxidoreductase subunit J, chloroplastic (159 aa).

This sequence belongs to the complex I 30 kDa subunit family. In terms of assembly, NDH is composed of at least 16 different subunits, 5 of which are encoded in the nucleus.

The protein resides in the plastid. It localises to the chloroplast thylakoid membrane. It carries out the reaction a plastoquinone + NADH + (n+1) H(+)(in) = a plastoquinol + NAD(+) + n H(+)(out). The enzyme catalyses a plastoquinone + NADPH + (n+1) H(+)(in) = a plastoquinol + NADP(+) + n H(+)(out). Its function is as follows. NDH shuttles electrons from NAD(P)H:plastoquinone, via FMN and iron-sulfur (Fe-S) centers, to quinones in the photosynthetic chain and possibly in a chloroplast respiratory chain. The immediate electron acceptor for the enzyme in this species is believed to be plastoquinone. Couples the redox reaction to proton translocation, and thus conserves the redox energy in a proton gradient. This chain is NAD(P)H-quinone oxidoreductase subunit J, chloroplastic, found in Oryza nivara (Indian wild rice).